The sequence spans 681 residues: MKRKREIKTWSREIVVGAIKNSFIKLNPLYMYKNPVMFVVEVGTFITLLATIFPTYFGSTPDEVGYNALVTFILFVTVLFANFAESLAEGRGKAQAETLRKTKKETMAKLVQSDGSIKIVKSSELKKGDIVICEAGDIIPADGEIIEGLAAIDESAITGESAPVIKEAGGDFSSVTGGTKVISDRIKIRVTVDEGESFLDRMIKLVEGAKRQKSPNEIALTTVLVSLTIIFIVVVMTLYPMAKFVHVRISAATMIALLVCLIPTTIGGLLSAIGIAGMDRVTRFNVIAMSGKAVEAAGDIDTILLDKTGTITFGNRLAADFIPVGGHSKEEVTYYALISSLKDLTPEGRSIVDLARKMGAKAPDDILEGAEVVEFSAETRMSGLNLKDGTIVRKGSYDKVKEYIGEKGGSIPDDLDKEVEKISLLGGTPLVVVKDNEVLGVIYLKDTIKPGMKERFKQLRAMGIKTIMITGDNPLTAKTIAEEAGVDEFIAESKPEDKINVIKREQAQGRLVAMTGDGTNDAPALAQADVGLAMNSGTMAAKEAANMVDLDSDPTKIIEVVGIGKQLLMTRGALTTFSIANDVAKYFAILPAIISETLPAIKVLDVMKLSSPTNAILSALIYNAIIIPILIPIAMRGVKYRPMSANALLMRNLLIYGLGGLIAPFVGIKLIDMIISSIFGM.

Helical transmembrane passes span 37–57 (MFVVEVGTFITLLATIFPTYF), 64–84 (VGYNALVTFILFVTVLFANFA), 218–238 (IALTTVLVSLTIIFIVVVMTL), and 255–275 (IALLVCLIPTTIGGLLSAIGI). The active-site 4-aspartylphosphate intermediate is aspartate 306. ATP-binding positions include aspartate 343, glutamate 347, 375 to 382 (FSAETRMS), and lysine 394. 2 residues coordinate Mg(2+): aspartate 517 and aspartate 521. The next 3 helical transmembrane spans lie at 573–595 (ALTTFSIANDVAKYFAILPAIIS), 615–635 (AILSALIYNAIIIPILIPIAM), and 655–675 (IYGLGGLIAPFVGIKLIDMII).

It belongs to the cation transport ATPase (P-type) (TC 3.A.3) family. Type IA subfamily. The system is composed of three essential subunits: KdpA, KdpB and KdpC.

It localises to the cell membrane. The catalysed reaction is K(+)(out) + ATP + H2O = K(+)(in) + ADP + phosphate + H(+). Part of the high-affinity ATP-driven potassium transport (or Kdp) system, which catalyzes the hydrolysis of ATP coupled with the electrogenic transport of potassium into the cytoplasm. This subunit is responsible for energy coupling to the transport system and for the release of the potassium ions to the cytoplasm. The polypeptide is Potassium-transporting ATPase ATP-binding subunit (Caldanaerobacter subterraneus subsp. tengcongensis (strain DSM 15242 / JCM 11007 / NBRC 100824 / MB4) (Thermoanaerobacter tengcongensis)).